The following is a 1215-amino-acid chain: Homeodomain-interacting protein kinase 3 (1215 aa).

A Glycyl lysine isopeptide (Lys-Gly) (interchain with G-Cter in SUMO2) cross-link involves residue lysine 27. A Protein kinase domain is found at 197–525 (YEVLDFLGRG…PAETLNHPFV (329 aa)). ATP-binding positions include 203-211 (LGRGTFGQV) and lysine 226. Aspartate 322 functions as the Proton acceptor in the catalytic mechanism. At tyrosine 359 the chain carries Phosphotyrosine. Residues 767–944 (QNRGILVKLM…NSMSDEEQES (178 aa)) are interaction with AR. Positions 796 to 891 (NTNIPHSAFI…SQRHSLRECK (96 aa)) are interaction with FAS. The required for localization to nuclear speckles stretch occupies residues 855–1011 (QTIIIADSPS…ENGLNADEHM (157 aa)). An SUMO interaction motifs (SIM); required for nuclear localization and kinase activity region spans residues 866–918 (AVSVITISSDTDEEETSQRHSLRECKGSLDCEACQSTLNIDRMCSLSSPDSTL). The interaction with UBL1 stretch occupies residues 870-880 (ITISSDTDEEE). Residues 912–929 (SSPDSTLSTSSSGQSSPS) are compositionally biased toward low complexity. The interval 912–987 (SSPDSTLSTS…ELVSSADTET (76 aa)) is disordered. The segment covering 945–957 (SCDTVDGSPTSDS) has biased composition (polar residues). A Glycyl lysine isopeptide (Lys-Gly) (interchain with G-Cter in SUMO) cross-link involves residue lysine 1208.

Belongs to the protein kinase superfamily. CMGC Ser/Thr protein kinase family. HIPK subfamily. In terms of assembly, interacts with Nkx1-2. Interacts with FAS and DAXX. Probably part of a complex consisting of HIPK3, FAS and FADD. Interacts with and stabilizes ligand-bound androgen receptor (AR). Interacts with UBL1/SUMO-1. Binds to NR5A1/SF1, SPEN/MINT and RUNX2. Post-translationally, autophosphorylated, but autophosphorylation is not required for catalytic activity. In terms of processing, may be sumoylated. As to expression, overexpressed in multidrug resistant cells. Highly expressed in heart and skeletal muscle, and at lower levels in placenta, pancreas, brain, spleen, prostate, thymus, testis, small intestine, colon and leukocytes. Not found in liver and lung.

It localises to the cytoplasm. Its subcellular location is the nucleus. The enzyme catalyses L-seryl-[protein] + ATP = O-phospho-L-seryl-[protein] + ADP + H(+). The catalysed reaction is L-threonyl-[protein] + ATP = O-phospho-L-threonyl-[protein] + ADP + H(+). In terms of biological role, serine/threonine-protein kinase involved in transcription regulation, apoptosis and steroidogenic gene expression. Phosphorylates JUN and RUNX2. Seems to negatively regulate apoptosis by promoting FADD phosphorylation. Enhances androgen receptor-mediated transcription. May act as a transcriptional corepressor for NK homeodomain transcription factors. The phosphorylation of NR5A1 activates SF1 leading to increased steroidogenic gene expression upon cAMP signaling pathway stimulation. In osteoblasts, supports transcription activation: phosphorylates RUNX2 that synergizes with SPEN/MINT to enhance FGFR2-mediated activation of the osteocalcin FGF-responsive element (OCFRE). This chain is Homeodomain-interacting protein kinase 3 (HIPK3), found in Homo sapiens (Human).